The sequence spans 159 residues: 2-C-methyl-D-erythritol 2,4-cyclodiphosphate synthase (159 aa).

Residues Asp8 and His10 each coordinate a divalent metal cation. Residues 8–10 (DVH) and 34–35 (HS) contribute to the 4-CDP-2-C-methyl-D-erythritol 2-phosphate site. His42 lines the a divalent metal cation pocket. Residues 56-58 (DIG), 61-65 (FPDTD), 100-106 (AQAPKML), 132-135 (TTTE), Phe139, and Arg142 each bind 4-CDP-2-C-methyl-D-erythritol 2-phosphate.

The protein belongs to the IspF family. In terms of assembly, homotrimer. Requires a divalent metal cation as cofactor.

The catalysed reaction is 4-CDP-2-C-methyl-D-erythritol 2-phosphate = 2-C-methyl-D-erythritol 2,4-cyclic diphosphate + CMP. It participates in isoprenoid biosynthesis; isopentenyl diphosphate biosynthesis via DXP pathway; isopentenyl diphosphate from 1-deoxy-D-xylulose 5-phosphate: step 4/6. In terms of biological role, involved in the biosynthesis of isopentenyl diphosphate (IPP) and dimethylallyl diphosphate (DMAPP), two major building blocks of isoprenoid compounds. Catalyzes the conversion of 4-diphosphocytidyl-2-C-methyl-D-erythritol 2-phosphate (CDP-ME2P) to 2-C-methyl-D-erythritol 2,4-cyclodiphosphate (ME-CPP) with a corresponding release of cytidine 5-monophosphate (CMP). The polypeptide is 2-C-methyl-D-erythritol 2,4-cyclodiphosphate synthase (Klebsiella pneumoniae subsp. pneumoniae (strain ATCC 700721 / MGH 78578)).